The chain runs to 127 residues: Large ribosomal subunit protein bL17 (127 aa).

The protein belongs to the bacterial ribosomal protein bL17 family. Part of the 50S ribosomal subunit. Contacts protein L32.

This is Large ribosomal subunit protein bL17 from Xanthomonas axonopodis pv. citri (strain 306).